A 57-amino-acid chain; its full sequence is Enolase (57 aa).

E25 serves as the catalytic Proton donor.

The protein belongs to the enolase family. The cofactor is Mg(2+).

The protein resides in the cytoplasm. It localises to the secreted. Its subcellular location is the cell surface. It carries out the reaction (2R)-2-phosphoglycerate = phosphoenolpyruvate + H2O. It functions in the pathway carbohydrate degradation; glycolysis; pyruvate from D-glyceraldehyde 3-phosphate: step 4/5. Catalyzes the reversible conversion of 2-phosphoglycerate (2-PG) into phosphoenolpyruvate (PEP). It is essential for the degradation of carbohydrates via glycolysis. The chain is Enolase from Clostridioides difficile (Peptoclostridium difficile).